A 227-amino-acid chain; its full sequence is Cytochrome c oxidase subunit 2 (227 aa).

At 1–14 (MAYPFQLGLQDATS) the chain is on the mitochondrial intermembrane side. Residues 15–45 (PIMEELLHFHDHTLMIVFLISSLVLYIISSM) form a helical membrane-spanning segment. At 46–59 (LTTKLTHTSTMDAQ) the chain is on the mitochondrial matrix side. A helical transmembrane segment spans residues 60 to 87 (EVETVWTILPAIILVLIALPSLRILYMM). Residues 88-227 (DETNNPSLTV…YFETWSALMV (140 aa)) lie on the Mitochondrial intermembrane side of the membrane. Residues H161, C196, E198, C200, H204, and M207 each coordinate Cu cation. E198 serves as a coordination point for Mg(2+). Y218 is modified (phosphotyrosine).

The protein belongs to the cytochrome c oxidase subunit 2 family. As to quaternary structure, component of the cytochrome c oxidase (complex IV, CIV), a multisubunit enzyme composed of 14 subunits. The complex is composed of a catalytic core of 3 subunits MT-CO1, MT-CO2 and MT-CO3, encoded in the mitochondrial DNA, and 11 supernumerary subunits COX4I, COX5A, COX5B, COX6A, COX6B, COX6C, COX7A, COX7B, COX7C, COX8 and NDUFA4, which are encoded in the nuclear genome. The complex exists as a monomer or a dimer and forms supercomplexes (SCs) in the inner mitochondrial membrane with NADH-ubiquinone oxidoreductase (complex I, CI) and ubiquinol-cytochrome c oxidoreductase (cytochrome b-c1 complex, complex III, CIII), resulting in different assemblies (supercomplex SCI(1)III(2)IV(1) and megacomplex MCI(2)III(2)IV(2)). Found in a complex with TMEM177, COA6, COX18, COX20, SCO1 and SCO2. Interacts with TMEM177 in a COX20-dependent manner. Interacts with COX20. Interacts with COX16. Requires Cu cation as cofactor.

Its subcellular location is the mitochondrion inner membrane. It carries out the reaction 4 Fe(II)-[cytochrome c] + O2 + 8 H(+)(in) = 4 Fe(III)-[cytochrome c] + 2 H2O + 4 H(+)(out). Component of the cytochrome c oxidase, the last enzyme in the mitochondrial electron transport chain which drives oxidative phosphorylation. The respiratory chain contains 3 multisubunit complexes succinate dehydrogenase (complex II, CII), ubiquinol-cytochrome c oxidoreductase (cytochrome b-c1 complex, complex III, CIII) and cytochrome c oxidase (complex IV, CIV), that cooperate to transfer electrons derived from NADH and succinate to molecular oxygen, creating an electrochemical gradient over the inner membrane that drives transmembrane transport and the ATP synthase. Cytochrome c oxidase is the component of the respiratory chain that catalyzes the reduction of oxygen to water. Electrons originating from reduced cytochrome c in the intermembrane space (IMS) are transferred via the dinuclear copper A center (CU(A)) of subunit 2 and heme A of subunit 1 to the active site in subunit 1, a binuclear center (BNC) formed by heme A3 and copper B (CU(B)). The BNC reduces molecular oxygen to 2 water molecules using 4 electrons from cytochrome c in the IMS and 4 protons from the mitochondrial matrix. The protein is Cytochrome c oxidase subunit 2 (MT-CO2) of Chrysocyon brachyurus (Maned wolf).